We begin with the raw amino-acid sequence, 200 residues long: Superoxide dismutase [Mn] 1 (200 aa).

H29, H76, D158, and H162 together coordinate Mn(2+).

Belongs to the iron/manganese superoxide dismutase family. In terms of assembly, homodimer or homotetramer. Mn(2+) serves as cofactor.

The enzyme catalyses 2 superoxide + 2 H(+) = H2O2 + O2. Its activity is regulated as follows. Inhibited by hydrogen peroxide. Is resistant to cyanide and azide inhibition. Its function is as follows. Destroys superoxide anion radicals which are normally produced within the cells and which are toxic to biological systems. The polypeptide is Superoxide dismutase [Mn] 1 (sod1) (Halobacterium salinarum (strain ATCC 700922 / JCM 11081 / NRC-1) (Halobacterium halobium)).